The primary structure comprises 315 residues: 4-hydroxy-3-methylbut-2-enyl diphosphate reductase (315 aa).

Cysteine 12 is a [4Fe-4S] cluster binding site. (2E)-4-hydroxy-3-methylbut-2-enyl diphosphate contacts are provided by histidine 41 and histidine 74. Dimethylallyl diphosphate-binding residues include histidine 41 and histidine 74. The isopentenyl diphosphate site is built by histidine 41 and histidine 74. Cysteine 96 lines the [4Fe-4S] cluster pocket. A (2E)-4-hydroxy-3-methylbut-2-enyl diphosphate-binding site is contributed by histidine 124. Histidine 124 is a dimethylallyl diphosphate binding site. Position 124 (histidine 124) interacts with isopentenyl diphosphate. Glutamate 126 acts as the Proton donor in catalysis. Position 168 (threonine 168) interacts with (2E)-4-hydroxy-3-methylbut-2-enyl diphosphate. Cysteine 198 contacts [4Fe-4S] cluster. Residues serine 226, serine 227, asparagine 228, and serine 270 each coordinate (2E)-4-hydroxy-3-methylbut-2-enyl diphosphate. Dimethylallyl diphosphate-binding residues include serine 226, serine 227, asparagine 228, and serine 270. Isopentenyl diphosphate-binding residues include serine 226, serine 227, asparagine 228, and serine 270.

The protein belongs to the IspH family. Requires [4Fe-4S] cluster as cofactor.

It carries out the reaction isopentenyl diphosphate + 2 oxidized [2Fe-2S]-[ferredoxin] + H2O = (2E)-4-hydroxy-3-methylbut-2-enyl diphosphate + 2 reduced [2Fe-2S]-[ferredoxin] + 2 H(+). It catalyses the reaction dimethylallyl diphosphate + 2 oxidized [2Fe-2S]-[ferredoxin] + H2O = (2E)-4-hydroxy-3-methylbut-2-enyl diphosphate + 2 reduced [2Fe-2S]-[ferredoxin] + 2 H(+). The protein operates within isoprenoid biosynthesis; dimethylallyl diphosphate biosynthesis; dimethylallyl diphosphate from (2E)-4-hydroxy-3-methylbutenyl diphosphate: step 1/1. It functions in the pathway isoprenoid biosynthesis; isopentenyl diphosphate biosynthesis via DXP pathway; isopentenyl diphosphate from 1-deoxy-D-xylulose 5-phosphate: step 6/6. Catalyzes the conversion of 1-hydroxy-2-methyl-2-(E)-butenyl 4-diphosphate (HMBPP) into a mixture of isopentenyl diphosphate (IPP) and dimethylallyl diphosphate (DMAPP). Acts in the terminal step of the DOXP/MEP pathway for isoprenoid precursor biosynthesis. This Pseudomonas savastanoi pv. phaseolicola (strain 1448A / Race 6) (Pseudomonas syringae pv. phaseolicola (strain 1448A / Race 6)) protein is 4-hydroxy-3-methylbut-2-enyl diphosphate reductase.